The following is a 200-amino-acid chain: Mediator of RNA polymerase II transcription subunit 22 (200 aa).

The stretch at 93–122 (SVNEAIDQRNQQLRALQEECDRKLITLRDE) forms a coiled coil. The tract at residues 169–200 (PLLASPETGAGPLQSAAPVHSHGGGPGPTEHT) is disordered. Residues 190–200 (HGGGPGPTEHT) are compositionally biased toward gly residues.

Belongs to the Mediator complex subunit 22 family. As to quaternary structure, component of the Mediator complex, which is composed of MED1, MED4, MED6, MED7, MED8, MED9, MED10, MED11, MED12, MED13, MED13L, MED14, MED15, MED16, MED17, MED18, MED19, MED20, MED21, MED22, MED23, MED24, MED25, MED26, MED27, MED29, MED30, MED31, CCNC, CDK8 and CDC2L6/CDK11. The MED12, MED13, CCNC and CDK8 subunits form a distinct module termed the CDK8 module. Mediator containing the CDK8 module is less active than Mediator lacking this module in supporting transcriptional activation. Individual preparations of the Mediator complex lacking one or more distinct subunits have been variously termed ARC, CRSP, DRIP, PC2, SMCC and TRAP.

The protein resides in the nucleus. Component of the Mediator complex, a coactivator involved in the regulated transcription of nearly all RNA polymerase II-dependent genes. Mediator functions as a bridge to convey information from gene-specific regulatory proteins to the basal RNA polymerase II transcription machinery. Mediator is recruited to promoters by direct interactions with regulatory proteins and serves as a scaffold for the assembly of a functional preinitiation complex with RNA polymerase II and the general transcription factors. This Mus musculus (Mouse) protein is Mediator of RNA polymerase II transcription subunit 22 (Med22).